A 436-amino-acid polypeptide reads, in one-letter code: Ribulose bisphosphate carboxylase large chain (436 aa).

Residues Asn104 and Thr154 each contribute to the substrate site. Catalysis depends on Lys156, which acts as the Proton acceptor. Position 158 (Lys158) interacts with substrate. Lys182, Asp184, and Glu185 together coordinate Mg(2+). Position 182 is an N6-carboxylysine (Lys182). His275 (proton acceptor) is an active-site residue. Positions 276, 308, and 360 each coordinate substrate.

The protein belongs to the RuBisCO large chain family. Type I subfamily. As to quaternary structure, heterohexadecamer of 8 large chains and 8 small chains. Mg(2+) serves as cofactor.

It localises to the plastid. The protein resides in the chloroplast. It catalyses the reaction 2 (2R)-3-phosphoglycerate + 2 H(+) = D-ribulose 1,5-bisphosphate + CO2 + H2O. It carries out the reaction D-ribulose 1,5-bisphosphate + O2 = 2-phosphoglycolate + (2R)-3-phosphoglycerate + 2 H(+). In terms of biological role, ruBisCO catalyzes two reactions: the carboxylation of D-ribulose 1,5-bisphosphate, the primary event in carbon dioxide fixation, as well as the oxidative fragmentation of the pentose substrate in the photorespiration process. Both reactions occur simultaneously and in competition at the same active site. The polypeptide is Ribulose bisphosphate carboxylase large chain (Euglena stellata).